Consider the following 52-residue polypeptide: UPF0181 protein HI_1434.2 (52 aa).

This sequence belongs to the UPF0181 family.

The polypeptide is UPF0181 protein HI_1434.2 (Haemophilus influenzae (strain ATCC 51907 / DSM 11121 / KW20 / Rd)).